Here is a 243-residue protein sequence, read N- to C-terminus: Large ribosomal subunit protein uL2 (243 aa).

Residues 202–243 (HGGGRHQHVGQSSTVSRNAPPGAKVGSIAARKTGRAKIKDRR) form a disordered region. Basic residues predominate over residues 233 to 243 (KTGRAKIKDRR).

This sequence belongs to the universal ribosomal protein uL2 family. As to quaternary structure, part of the 50S ribosomal subunit. Forms a bridge to the 30S subunit in the 70S ribosome.

In terms of biological role, one of the primary rRNA binding proteins. Required for association of the 30S and 50S subunits to form the 70S ribosome, for tRNA binding and peptide bond formation. It has been suggested to have peptidyltransferase activity; this is somewhat controversial. Makes several contacts with the 16S rRNA in the 70S ribosome. The polypeptide is Large ribosomal subunit protein uL2 (Cenarchaeum symbiosum (strain A)).